A 112-amino-acid chain; its full sequence is UPF0060 membrane protein CMS0846 (112 aa).

A run of 4 helical transmembrane segments spans residues 6–26 (VILF…IWQA), 32–52 (PFWW…IATL), 61–81 (ILAA…TVVD), and 87–107 (RWDV…MAAP).

The protein belongs to the UPF0060 family.

Its subcellular location is the cell membrane. The polypeptide is UPF0060 membrane protein CMS0846 (Clavibacter sepedonicus (Clavibacter michiganensis subsp. sepedonicus)).